The following is a 208-amino-acid chain: Outer-membrane lipoprotein carrier protein (208 aa).

An N-terminal signal peptide occupies residues 1–22 (MRKTLTALMLSLPLLTPHMAFA).

The protein belongs to the LolA family. In terms of assembly, monomer.

The protein resides in the periplasm. Its function is as follows. Participates in the translocation of lipoproteins from the inner membrane to the outer membrane. Only forms a complex with a lipoprotein if the residue after the N-terminal Cys is not an aspartate (The Asp acts as a targeting signal to indicate that the lipoprotein should stay in the inner membrane). The polypeptide is Outer-membrane lipoprotein carrier protein (Shewanella woodyi (strain ATCC 51908 / MS32)).